A 1001-amino-acid polypeptide reads, in one-letter code: Transcription-repair-coupling factor (1001 aa).

In terms of domain architecture, Helicase ATP-binding spans 499–658; the sequence is DLSSHRVMDR…LSQIKGISSL (160 aa). Residue 512–519 participates in ATP binding; sequence GDVGFGKT. The DEEH box signature appears at 611-614; the sequence is DEEH. In terms of domain architecture, Helicase C-terminal spans 679–835; that stretch reads LLKEIIYREL…SIAYHDLEIR (157 aa).

The protein in the N-terminal section; belongs to the UvrB family. It in the C-terminal section; belongs to the helicase family. RecG subfamily.

It localises to the cytoplasm. In terms of biological role, couples transcription and DNA repair by recognizing RNA polymerase (RNAP) stalled at DNA lesions. Mediates ATP-dependent release of RNAP and its truncated transcript from the DNA, and recruitment of nucleotide excision repair machinery to the damaged site. The polypeptide is Transcription-repair-coupling factor (Helicobacter pylori (strain J99 / ATCC 700824) (Campylobacter pylori J99)).